We begin with the raw amino-acid sequence, 351 residues long: Nuclear inhibitor of protein phosphatase 1 (351 aa).

The interval 1-142 is interaction with CDC5L, SF3B1 and MELK; it reads MAAAANSGSS…LPSAVKGDEK (142 aa). The region spanning 49–101 is the FHA domain; it reads YLFGRNPDLCDFTIDHQSCSRVHAALVYHKHLKRVFLIDLNSTHGTFLGHIRL. The tract at residues 143–224 is interaction with EED; sequence MGGEDDELKG…VDPSVGRFRN (82 aa). At threonine 161 the chain carries Phosphothreonine; by CK2; in vitro. Serine 178 is modified (phosphoserine; by PKA; in vitro). 2 short sequence motifs (nuclear localization signal) span residues 185-209 and 210-240; these read GNLD…DDEI and INPE…RVEG. The tract at residues 191-200 is involved in PP-1 inhibition; it reads RPKRKRKNSR. Residue serine 199 is modified to Phosphoserine. The involved in PP-1 binding stretch occupies residues 200–203; sequence RVTF. At serine 204 the chain carries Phosphoserine. Residue serine 249 is modified to Phosphoserine. A Phosphotyrosine modification is found at tyrosine 264. Residues 310–329 form an interaction with EED region; the sequence is AVNMNPAPNPAVYNPEAVNE. The segment at 316–351 is disordered; it reads APNPAVYNPEAVNEPKKKKYAKEAWPGKKPTPSLLI. Positions 330-351 are RNA-binding; the sequence is PKKKKYAKEAWPGKKPTPSLLI. Residues 331–337 form an involved in PP-1 inhibition region; that stretch reads KKKKYAK. Tyrosine 335 bears the Phosphotyrosine mark.

As to quaternary structure, interacts with phosphorylated CDC5L, SF3B1 and MELK. Interacts with EED. Part of a complex consisting of PPP1R8, EED, HDAC2 and PP-1. Part of the spliceosome. Interacts with PPP1CA, PPP1CB and PPP1CC. Post-translationally, the N-terminus is blocked. Inactivated by phosphorylation on Ser-199 or Ser-204.

It is found in the nucleus. It localises to the nucleus speckle. Its function is as follows. Inhibitor subunit of the major nuclear protein phosphatase-1 (PP-1). It has RNA-binding activity but does not cleave RNA and may target PP-1 to RNA-associated substrates. May also be involved in pre-mRNA splicing. Binds DNA and might act as a transcriptional repressor. Seems to be required for cell proliferation. This Bos taurus (Bovine) protein is Nuclear inhibitor of protein phosphatase 1 (PPP1R8).